A 275-amino-acid polypeptide reads, in one-letter code: Thiazole synthase (275 aa).

The active-site Schiff-base intermediate with DXP is K116. Residues G177, 203 to 204, and 225 to 226 each bind 1-deoxy-D-xylulose 5-phosphate; these read AG and NT.

It belongs to the ThiG family. Homotetramer. Forms heterodimers with either ThiH or ThiS.

The protein resides in the cytoplasm. It catalyses the reaction [ThiS sulfur-carrier protein]-C-terminal-Gly-aminoethanethioate + 2-iminoacetate + 1-deoxy-D-xylulose 5-phosphate = [ThiS sulfur-carrier protein]-C-terminal Gly-Gly + 2-[(2R,5Z)-2-carboxy-4-methylthiazol-5(2H)-ylidene]ethyl phosphate + 2 H2O + H(+). It participates in cofactor biosynthesis; thiamine diphosphate biosynthesis. Catalyzes the rearrangement of 1-deoxy-D-xylulose 5-phosphate (DXP) to produce the thiazole phosphate moiety of thiamine. Sulfur is provided by the thiocarboxylate moiety of the carrier protein ThiS. In vitro, sulfur can be provided by H(2)S. The protein is Thiazole synthase of Acaryochloris marina (strain MBIC 11017).